The primary structure comprises 396 residues: Ribosomal RNA large subunit methyltransferase I (396 aa).

In terms of domain architecture, PUA spans 2–81; that stretch reads SVRLVLAKGR…ESIDIAFFTR (80 aa).

The protein belongs to the methyltransferase superfamily. RlmI family.

It is found in the cytoplasm. The enzyme catalyses cytidine(1962) in 23S rRNA + S-adenosyl-L-methionine = 5-methylcytidine(1962) in 23S rRNA + S-adenosyl-L-homocysteine + H(+). Specifically methylates the cytosine at position 1962 (m5C1962) of 23S rRNA. The polypeptide is Ribosomal RNA large subunit methyltransferase I (Escherichia coli (strain UTI89 / UPEC)).